The chain runs to 514 residues: ATP synthase subunit alpha (514 aa).

170-177 (GDRQTGKT) contributes to the ATP binding site.

It belongs to the ATPase alpha/beta chains family. F-type ATPases have 2 components, CF(1) - the catalytic core - and CF(0) - the membrane proton channel. CF(1) has five subunits: alpha(3), beta(3), gamma(1), delta(1), epsilon(1). CF(0) has three main subunits: a(1), b(2) and c(9-12). The alpha and beta chains form an alternating ring which encloses part of the gamma chain. CF(1) is attached to CF(0) by a central stalk formed by the gamma and epsilon chains, while a peripheral stalk is formed by the delta and b chains.

Its subcellular location is the cell inner membrane. The enzyme catalyses ATP + H2O + 4 H(+)(in) = ADP + phosphate + 5 H(+)(out). Produces ATP from ADP in the presence of a proton gradient across the membrane. The alpha chain is a regulatory subunit. This is ATP synthase subunit alpha from Acinetobacter baumannii (strain AB307-0294).